The following is a 292-amino-acid chain: GTP cyclohydrolase FolE2 (292 aa).

It belongs to the GTP cyclohydrolase IV family.

The catalysed reaction is GTP + H2O = 7,8-dihydroneopterin 3'-triphosphate + formate + H(+). Its pathway is cofactor biosynthesis; 7,8-dihydroneopterin triphosphate biosynthesis; 7,8-dihydroneopterin triphosphate from GTP: step 1/1. Functionally, converts GTP to 7,8-dihydroneopterin triphosphate. This Staphylococcus aureus (strain Newman) protein is GTP cyclohydrolase FolE2.